The sequence spans 585 residues: Testis-specific serine kinase substrate (585 aa).

Residues 91–108 (EPDSSGTDSTTEDSGPLA) show a composition bias toward low complexity. A disordered region spans residues 91 to 125 (EPDSSGTDSTTEDSGPLALPGPPASPTTPWAPEDP). Ser224 carries the post-translational modification Phosphoserine. Disordered regions lie at residues 264 to 312 (HGLS…SEQE) and 559 to 585 (LEGSTGAMGGGSNGGAPPKRGSPGSEQ). The residue at position 281 (Ser281) is a Phosphoserine; by TSSK1 and TSSK2. Residue Ser309 is modified to Phosphoserine.

In terms of processing, phosphorylated on serine residue(s) by STK22A/TSSK1 and STK22B/TSSK2. Testis specific.

The protein resides in the cytoplasm. It localises to the cytoskeleton. It is found in the microtubule organizing center. The protein localises to the centrosome. Its subcellular location is the centriole. The protein resides in the cytoplasmic vesicle. It localises to the secretory vesicle. It is found in the acrosome. In terms of biological role, may play a role in testicular physiology, most probably in the process of spermatogenesis or spermatid development. This Mus musculus (Mouse) protein is Testis-specific serine kinase substrate (Tsks).